A 490-amino-acid polypeptide reads, in one-letter code: Hexokinase (490 aa).

Residues 21–466 (QNLLEHIKHF…SGVGAALIAA (446 aa)) form the Hexokinase domain. A hexokinase small subdomain region spans residues 75 to 209 (DGKETGTFLA…GLPIKVAALI (135 aa)). The segment at 210-455 (NDTTGTLIAS…DKVTIHAAED (246 aa)) is hexokinase large subdomain.

This sequence belongs to the hexokinase family. In terms of assembly, monomer.

The enzyme catalyses a D-hexose + ATP = a D-hexose 6-phosphate + ADP + H(+). It carries out the reaction D-fructose + ATP = D-fructose 6-phosphate + ADP + H(+). It catalyses the reaction D-glucose + ATP = D-glucose 6-phosphate + ADP + H(+). It participates in carbohydrate metabolism; hexose metabolism. The protein operates within carbohydrate degradation; glycolysis; D-glyceraldehyde 3-phosphate and glycerone phosphate from D-glucose: step 1/4. Its function is as follows. Catalyzes the phosphorylation of hexose, such as D-glucose and D-fructose, to hexose 6-phosphate (D-glucose 6-phosphate and D-fructose 6-phosphate, respectively). Mediates the initial step of glycolysis by catalyzing phosphorylation of D-glucose to D-glucose 6-phosphate. The protein is Hexokinase (hxkA) of Emericella nidulans (strain FGSC A4 / ATCC 38163 / CBS 112.46 / NRRL 194 / M139) (Aspergillus nidulans).